The following is a 210-amino-acid chain: Orotate phosphoribosyltransferase (210 aa).

5-phospho-alpha-D-ribose 1-diphosphate-binding positions include Arg97, Lys101, His103, and 123–131 (EDLISTGGS). Ser127 is a binding site for orotate.

This sequence belongs to the purine/pyrimidine phosphoribosyltransferase family. PyrE subfamily. Homodimer. Mg(2+) serves as cofactor.

It catalyses the reaction orotidine 5'-phosphate + diphosphate = orotate + 5-phospho-alpha-D-ribose 1-diphosphate. Its pathway is pyrimidine metabolism; UMP biosynthesis via de novo pathway; UMP from orotate: step 1/2. Functionally, catalyzes the transfer of a ribosyl phosphate group from 5-phosphoribose 1-diphosphate to orotate, leading to the formation of orotidine monophosphate (OMP). In Enterococcus faecalis (strain ATCC 700802 / V583), this protein is Orotate phosphoribosyltransferase.